We begin with the raw amino-acid sequence, 568 residues long: Urease subunit alpha (568 aa).

The 439-residue stretch at Gly130 to Phe568 folds into the Urease domain. Positions 135, 137, and 218 each coordinate Ni(2+). Lys218 is modified (N6-carboxylysine). His220 contributes to the substrate binding site. Residues His247 and His273 each contribute to the Ni(2+) site. The active-site Proton donor is the His321. Residue Asp361 participates in Ni(2+) binding.

The protein belongs to the metallo-dependent hydrolases superfamily. Urease alpha subunit family. Heterotrimer of UreA (gamma), UreB (beta) and UreC (alpha) subunits. Three heterotrimers associate to form the active enzyme. The cofactor is Ni cation. Carboxylation allows a single lysine to coordinate two nickel ions.

It localises to the cytoplasm. It catalyses the reaction urea + 2 H2O + H(+) = hydrogencarbonate + 2 NH4(+). The protein operates within nitrogen metabolism; urea degradation; CO(2) and NH(3) from urea (urease route): step 1/1. The protein is Urease subunit alpha of Burkholderia pseudomallei (strain 1106a).